Reading from the N-terminus, the 411-residue chain is Multidrug resistance protein MdtH (411 aa).

11 helical membrane passes run 13–33 (YFLL…FPLI), 45–65 (ALLV…LGIF), 73–95 (LGAK…FMGI), 99–116 (PWLL…GTLF), 139–159 (LLMI…SWLL), 165–185 (LVCL…AWLL), 213–233 (YVFT…ILPI), 243–263 (AAVR…LYPI), 288–308 (IIPI…GIFY), 340–360 (LGLA…YDMG), and 365–385 (IPQL…LGFY).

Belongs to the major facilitator superfamily. DHA1 family. MdtH (TC 2.A.1.2.21) subfamily.

The protein resides in the cell membrane. The protein is Multidrug resistance protein MdtH of Baumannia cicadellinicola subsp. Homalodisca coagulata.